Here is a 296-residue protein sequence, read N- to C-terminus: Short-chain dehydrogenase/reductase ascJ (296 aa).

NADP(+)-binding residues include I28, D66, and N93. S155 serves as the catalytic Proton donor. 3 residues coordinate NADP(+): Y168, K172, and T205. Y168 (proton acceptor) is an active-site residue. K172 acts as the Lowers pKa of active site Tyr in catalysis.

This sequence belongs to the short-chain dehydrogenases/reductases (SDR) family.

It carries out the reaction ascofuranol + A = ascofuranone + AH2. The protein operates within secondary metabolite biosynthesis; terpenoid biosynthesis. Short-chain dehydrogenase/reductase; part of the asc-2 gene cluster that mediates the biosynthesis of ascofuranone, a strong inhibitor of cyanide-insensitive alternative oxidases and a promising drug candidate against African trypanosomiasis. The first step in the pathway is performed by the non-reducing polyketide synthase ascC that produces orsellinic acid by condensing acetyl-CoA with 3 malonyl-CoA units. Orsellinic acid is then prenylated by the prenyltransferase ascA to yield ilicicolinic acid B. Ilicicolinic acid B is further reduced to ilicicolin B by the reductase ascB. The halogenase ascD then chlorinates ilicicolin B to produce ilicicolin A which is converted to ilicicolin A epoxide by the cytochrome P450 monooxygenase ascE that catalyzes stereoselective epoxidation of the terminal double bond of the prenyl group. Ilicicolin A epoxide is the last common precursor for the biosynthesis of ascofuranone and ascochlorin. The terpene cyclase ascF produces a monocyclic terpene, and the cyclization reaction is proposed to be initiated by protonation of the terminal epoxide of ilicicolin A epoxide to generate a monocyclic tertiarycation, which is followed by a series of hydride and methyl shifts with abstraction of proton, leading to the formation of the (14S,15R,19R)-trimethylcyclohexanone ring structure of ilicicolin C, which is finally reduced to ascochlorin by the dehydrogenase ascG. On the other hand, ilicicolin A epoxide is hydroxylated by the cytochrome P450 monooxygenase ascH, and the resultant product is cyclized by the terpene cyclase ascI to ascofuranol via protonation-initiated epoxide ring opening, which facilitates the 6-endo-tet cyclization to form the tetrahy-drofuran ring. Finally, ascofuranol is oxidized into ascofuranone by ascJ. This Acremonium egyptiacum (Oospora egyptiaca) protein is Short-chain dehydrogenase/reductase ascJ.